The sequence spans 468 residues: Ribulose bisphosphate carboxylase large chain (468 aa).

Position 5 is an N6,N6,N6-trimethyllysine (Lys5). Residues Asn114 and Thr164 each coordinate substrate. Lys166 functions as the Proton acceptor in the catalytic mechanism. Lys168 provides a ligand contact to substrate. The Mg(2+) site is built by Lys192, Asp194, and Glu195. Position 192 is an N6-carboxylysine (Lys192). Catalysis depends on His285, which acts as the Proton acceptor. Arg286, His318, and Ser370 together coordinate substrate.

It belongs to the RuBisCO large chain family. Type I subfamily. In terms of assembly, heterohexadecamer of 8 large chains and 8 small chains; disulfide-linked. The disulfide link is formed within the large subunit homodimers. Mg(2+) serves as cofactor. In terms of processing, the disulfide bond which can form in the large chain dimeric partners within the hexadecamer appears to be associated with oxidative stress and protein turnover.

The protein resides in the plastid. The protein localises to the chloroplast. It carries out the reaction 2 (2R)-3-phosphoglycerate + 2 H(+) = D-ribulose 1,5-bisphosphate + CO2 + H2O. It catalyses the reaction D-ribulose 1,5-bisphosphate + O2 = 2-phosphoglycolate + (2R)-3-phosphoglycerate + 2 H(+). Its function is as follows. RuBisCO catalyzes two reactions: the carboxylation of D-ribulose 1,5-bisphosphate, the primary event in carbon dioxide fixation, as well as the oxidative fragmentation of the pentose substrate in the photorespiration process. Both reactions occur simultaneously and in competition at the same active site. This chain is Ribulose bisphosphate carboxylase large chain, found in Anthospermum herbaceum.